A 136-amino-acid chain; its full sequence is MKSKGTRFERDLLVELWKAGFAAIRVAGSGVSPFPCPDIVAGNGRTYLAIEVKMRKELPLYLSADEVEQLVTFARGFGAEAYVALKLPRKKWRFFPVQMLERTEKNFKIDESVYPLGLEIAEVAGKFFQERFGEKV.

Residue Glu-9 coordinates Mg(2+). The active site involves Ser-29. Mg(2+) is bound by residues Asp-38 and Glu-51.

The protein belongs to the Holliday junction resolvase Hjc family. Homodimer. It depends on Mg(2+) as a cofactor.

The enzyme catalyses Endonucleolytic cleavage at a junction such as a reciprocal single-stranded crossover between two homologous DNA duplexes (Holliday junction).. Functionally, a structure-specific endonuclease that resolves Holliday junction (HJ) intermediates during genetic recombination. Cleaves 4-way DNA junctions introducing paired nicks in opposing strands, leaving a 5'-terminal phosphate and a 3'-terminal hydroxyl group that are subsequently ligated to produce recombinant products. The polypeptide is Crossover junction endodeoxyribonuclease Hjc (Archaeoglobus fulgidus (strain ATCC 49558 / DSM 4304 / JCM 9628 / NBRC 100126 / VC-16)).